We begin with the raw amino-acid sequence, 150 residues long: Large ribosomal subunit protein bL9 (150 aa).

It belongs to the bacterial ribosomal protein bL9 family.

Functionally, binds to the 23S rRNA. In Limosilactobacillus reuteri (strain DSM 20016) (Lactobacillus reuteri), this protein is Large ribosomal subunit protein bL9.